The primary structure comprises 186 residues: Elongation factor P (186 aa).

Belongs to the elongation factor P family.

The protein localises to the cytoplasm. It functions in the pathway protein biosynthesis; polypeptide chain elongation. Functionally, involved in peptide bond synthesis. Stimulates efficient translation and peptide-bond synthesis on native or reconstituted 70S ribosomes in vitro. Probably functions indirectly by altering the affinity of the ribosome for aminoacyl-tRNA, thus increasing their reactivity as acceptors for peptidyl transferase. In Cupriavidus necator (strain ATCC 17699 / DSM 428 / KCTC 22496 / NCIMB 10442 / H16 / Stanier 337) (Ralstonia eutropha), this protein is Elongation factor P.